A 206-amino-acid chain; its full sequence is Imidazole glycerol phosphate synthase subunit hisH (206 aa).

The region spanning 2-206 is the Glutamine amidotransferase type-1 domain; sequence KVGLVDYSMG…REVMKKAASL (205 aa). Cys80 acts as the Nucleophile in catalysis. Catalysis depends on residues His184 and Glu186.

Heterodimer of hisH and hisF.

It localises to the plastid. The protein localises to the chloroplast. The catalysed reaction is 5-[(5-phospho-1-deoxy-D-ribulos-1-ylimino)methylamino]-1-(5-phospho-beta-D-ribosyl)imidazole-4-carboxamide + L-glutamine = D-erythro-1-(imidazol-4-yl)glycerol 3-phosphate + 5-amino-1-(5-phospho-beta-D-ribosyl)imidazole-4-carboxamide + L-glutamate + H(+). It carries out the reaction L-glutamine + H2O = L-glutamate + NH4(+). The protein operates within amino-acid biosynthesis; L-histidine biosynthesis; L-histidine from 5-phospho-alpha-D-ribose 1-diphosphate: step 5/9. Functionally, IGPS catalyzes the conversion of PRFAR and glutamine to IGP, AICAR and glutamate. The HisH subunit catalyzes the hydrolysis of glutamine to glutamate and ammonia as part of the synthesis of IGP and AICAR. The resulting ammonia molecule is channeled to the active site of HisF. The sequence is that of Imidazole glycerol phosphate synthase subunit hisH from Cyanidioschyzon merolae (strain NIES-3377 / 10D) (Unicellular red alga).